The following is a 340-amino-acid chain: uncharacterized protein (340 aa).

A helical transmembrane segment spans residues 6–26 (ITFGLLVLMVCVILFVLYVQL).

The protein resides in the cell membrane. This is an uncharacterized protein from Bacillus subtilis (strain 168).